Consider the following 469-residue polypeptide: Probable indole-3-acetic acid-amido synthetase GH3.13 (469 aa).

Positions 1–26 (MTSTSSENAPDHDHDHDASSPAPATA) are disordered. Positions 9-18 (APDHDHDHDA) are enriched in basic and acidic residues.

It belongs to the IAA-amido conjugating enzyme family.

Functionally, may catalyze the synthesis of indole-3-acetic acid (IAA)-amino acid conjugates, providing a mechanism for the plant to cope with the presence of excess auxin. This Oryza sativa subsp. japonica (Rice) protein is Probable indole-3-acetic acid-amido synthetase GH3.13 (GH3.13).